Reading from the N-terminus, the 502-residue chain is Cytochrome P450 monooxygenase verC (502 aa).

A helical membrane pass occupies residues 9-29; it reads IAALPMVSLLGAALIVVSVLG. 4 N-linked (GlcNAc...) asparagine glycosylation sites follow: asparagine 124, asparagine 190, asparagine 271, and asparagine 342. Cysteine 444 is a binding site for heme.

This sequence belongs to the cytochrome P450 family. It depends on heme as a cofactor.

The protein localises to the membrane. Its pathway is mycotoxin biosynthesis. In terms of biological role, cytochrome P450 monooxygenase; part of the gene cluster that mediates the biosynthesis of 11'-deoxyverticillin A, one of the dimeric epipolythiodioxopiperazines (ETPs) from the verticillin family that act as mycotoxins. 11'-deoxyverticillin A is required for normal conidiation. The nonribosomal peptide synthetase verP is speculated to be responsible for condensation of amino acids to form the carbon skeleton of verticillin, whereas the cluster-specific tailoring enzymes are involved in further modifications leading to the production of 11'-deoxyverticillin A. The chain is Cytochrome P450 monooxygenase verC from Clonostachys rogersoniana.